The following is a 271-amino-acid chain: DNA-directed RNA polymerase subunit Rpo3 (271 aa).

Belongs to the archaeal Rpo3/eukaryotic RPB3 RNA polymerase subunit family. As to quaternary structure, part of the RNA polymerase complex.

It is found in the cytoplasm. It carries out the reaction RNA(n) + a ribonucleoside 5'-triphosphate = RNA(n+1) + diphosphate. DNA-dependent RNA polymerase (RNAP) catalyzes the transcription of DNA into RNA using the four ribonucleoside triphosphates as substrates. The chain is DNA-directed RNA polymerase subunit Rpo3 from Picrophilus torridus (strain ATCC 700027 / DSM 9790 / JCM 10055 / NBRC 100828 / KAW 2/3).